Here is a 419-residue protein sequence, read N- to C-terminus: L-rhamnose isomerase (419 aa).

3 residues coordinate Mn(2+): H262, D294, and D296.

Belongs to the rhamnose isomerase family. In terms of assembly, homotetramer. Mn(2+) serves as cofactor.

The protein localises to the cytoplasm. It carries out the reaction L-rhamnopyranose = L-rhamnulose. The protein operates within carbohydrate degradation; L-rhamnose degradation; glycerone phosphate from L-rhamnose: step 1/3. Its function is as follows. Catalyzes the interconversion of L-rhamnose and L-rhamnulose. The protein is L-rhamnose isomerase of Escherichia coli (strain K12 / MC4100 / BW2952).